Reading from the N-terminus, the 146-residue chain is MATPATVSIEPTLAAIRARWCINSSKTTQSFNDPASMEEVVEYLKGTYSALRKSVACAKLKILHLKQRMQNATNFLARLMSCKNQASRSHHSTAKSAKSALSSDSGDGSDPDPEPETFPSAFITTPTNSIMLKAFFANISITEVAK.

The disordered stretch occupies residues 87–121 (SRSHHSTAKSAKSALSSDSGDGSDPDPEPETFPSA). Positions 94-106 (AKSAKSALSSDSG) are enriched in low complexity.

This is an uncharacterized protein from Escherichia coli (strain K12).